A 228-amino-acid polypeptide reads, in one-letter code: Prolactin-2B1 (228 aa).

The first 31 residues, 1–31 (MLLSLTQMLSSRASSRLFLVSYLLLWENVVS), serve as a signal peptide directing secretion. Cystine bridges form between Cys-89–Cys-194 and Cys-203–Cys-228.

It belongs to the somatotropin/prolactin family. In terms of tissue distribution, expressed specifically in placenta. Expressed at high levels in trophoblast cells from both junctional and labyrinth zones of the chorioallantoic placenta the last week of gestation.

It localises to the secreted. This chain is Prolactin-2B1 (Prl2b1), found in Mus musculus (Mouse).